A 284-amino-acid polypeptide reads, in one-letter code: Pantothenate synthetase (284 aa).

32-39 is an ATP binding site; the sequence is MGALHEGH. His39 (proton donor) is an active-site residue. Gln63 is a (R)-pantoate binding site. Gln63 provides a ligand contact to beta-alanine. 149–152 contributes to the ATP binding site; that stretch reads GEKD. A (R)-pantoate-binding site is contributed by Gln155. Residues Val178 and 186-189 each bind ATP; that span reads LSSR.

This sequence belongs to the pantothenate synthetase family. In terms of assembly, homodimer.

The protein resides in the cytoplasm. It catalyses the reaction (R)-pantoate + beta-alanine + ATP = (R)-pantothenate + AMP + diphosphate + H(+). It participates in cofactor biosynthesis; (R)-pantothenate biosynthesis; (R)-pantothenate from (R)-pantoate and beta-alanine: step 1/1. Catalyzes the condensation of pantoate with beta-alanine in an ATP-dependent reaction via a pantoyl-adenylate intermediate. This chain is Pantothenate synthetase, found in Chelativorans sp. (strain BNC1).